The chain runs to 517 residues: MASFKPTKVLSYPKLGEKVTEETLYWKNYKPPVQIKEFGAVSKIDFSPLPPHNYAVTASTRVHIYGLHSQEPIRNFTRFHDTAYGGSFRGDGKLLVAGSEEGLIRLFDIGGRVSLRQFKGHSKAVHATSFLSDGFRVLSGSDDLTCRVWDVASAVELSSITEHTDYIRAIAPSKLNPDVFVTGSYDHTVKMFDVRSGNSVMTMQHGQPVECVLLYPSEALLVSTGGRYVKVWDLLKGGQQLVSLKNHHKTVTCACLSSSNKLLTASLDRHVKVYNSSYKVVHNFDCASSILSLAVAPDDEAVAVGMTNGVLSIRHRKHKEEKEALTGRRKRGPSYRFFVKGKNFVPRQDDFLVSKPVRQHLQKYDKQLKRFEVSKALDTALETWTRTTKPEVTVAVIMELNRRGTLKNALAGRDEVSLTKILNFLLKHITDPRFSRPLLTVGDIVLDLYQQVIPQSPVVERLLQRLYEILGREAELQQELLQVLGILDTLFASLMPRKEVASFGAAAAAQESQLQAA.

WD repeat units follow at residues 36 to 75, 78 to 117, 120 to 159, 162 to 202, 204 to 242, 246 to 285, and 287 to 324; these read KEFG…PIRN, RFHD…SLRQ, GHSK…ELSS, EHTD…SVMT, QHGQ…QQLV, NHHK…HNFD, and ASSI…EKEA.

Part of the small subunit (SSU) processome, composed of more than 70 proteins and the RNA chaperone small nucleolar RNA (snoRNA) U3. May be a component of the proposed t-UTP subcomplex of the ribosomal small subunit (SSU) processome.

It is found in the nucleus. It localises to the nucleolus. Ribosome biogenesis factor. Involved in nucleolar processing of pre-18S ribosomal RNA. Required for optimal pre-ribosomal RNA transcription by RNA polymerase I. Part of the small subunit (SSU) processome, first precursor of the small eukaryotic ribosomal subunit. During the assembly of the SSU processome in the nucleolus, many ribosome biogenesis factors, an RNA chaperone and ribosomal proteins associate with the nascent pre-rRNA and work in concert to generate RNA folding, modifications, rearrangements and cleavage as well as targeted degradation of pre-ribosomal RNA by the RNA exosome. The polypeptide is U3 small nucleolar RNA-associated protein 15 homolog (utp15) (Danio rerio (Zebrafish)).